Consider the following 282-residue polypeptide: Nucleotide-binding protein XAC2976 (282 aa).

5–12 (GLSGSGKS) provides a ligand contact to ATP. 57 to 60 (DVRS) serves as a coordination point for GTP.

It belongs to the RapZ-like family.

Functionally, displays ATPase and GTPase activities. This chain is Nucleotide-binding protein XAC2976, found in Xanthomonas axonopodis pv. citri (strain 306).